Consider the following 129-residue polypeptide: Follitropin subunit beta (129 aa).

A signal peptide spans 1–20 (MKTVQFCFLFCCWKAICCNS). 6 disulfides stabilise this stretch: cysteine 21/cysteine 69, cysteine 35/cysteine 84, cysteine 38/cysteine 122, cysteine 46/cysteine 100, cysteine 50/cysteine 102, and cysteine 105/cysteine 112. N-linked (GlcNAc...) asparagine glycans are attached at residues asparagine 25 and asparagine 42.

This sequence belongs to the glycoprotein hormones subunit beta family. As to quaternary structure, heterodimer. The active follitropin is a heterodimer composed of an alpha chain/CGA shared with other hormones and a unique beta chain/FSHB shown here.

It is found in the secreted. Functionally, together with the alpha chain CGA constitutes follitropin, the follicle-stimulating hormone, and provides its biological specificity to the hormone heterodimer. Binds FSHR, a G protein-coupled receptor, on target cells to activate downstream signaling pathways. Follitropin is involved in follicle development and spermatogenesis in reproductive organs. The protein is Follitropin subunit beta (FSHB) of Aotus nancymaae (Ma's night monkey).